A 437-amino-acid chain; its full sequence is Glutamate-1-semialdehyde 2,1-aminomutase (437 aa).

Lys-274 bears the N6-(pyridoxal phosphate)lysine mark.

The protein belongs to the class-III pyridoxal-phosphate-dependent aminotransferase family. HemL subfamily. As to quaternary structure, homodimer. Pyridoxal 5'-phosphate serves as cofactor.

It is found in the cytoplasm. The catalysed reaction is (S)-4-amino-5-oxopentanoate = 5-aminolevulinate. It functions in the pathway porphyrin-containing compound metabolism; protoporphyrin-IX biosynthesis; 5-aminolevulinate from L-glutamyl-tRNA(Glu): step 2/2. The sequence is that of Glutamate-1-semialdehyde 2,1-aminomutase from Paracidovorax citrulli (strain AAC00-1) (Acidovorax citrulli).